A 223-amino-acid polypeptide reads, in one-letter code: Transmembrane protein 235 (223 aa).

The signal sequence occupies residues 1-28 (MARLGALLLAAALGALLSFALLAAAVAS). N-linked (GlcNAc...) asparagine glycosylation occurs at Asn41. 3 consecutive transmembrane segments (helical) span residues 96–116 (VIVVLPLSLVLLVCGWICGLL), 126–146 (LLFTGCYFLLGSVLTLAGVSI), and 176–196 (WSMALAWGSCALEAFSGTLLL).

This sequence belongs to the PMP-22/EMP/MP20 family. N-glycosylated.

It is found in the membrane. It localises to the endoplasmic reticulum. The protein is Transmembrane protein 235 (TMEM235) of Homo sapiens (Human).